We begin with the raw amino-acid sequence, 363 residues long: tRNA-specific 2-thiouridylase MnmA (363 aa).

ATP is bound by residues 6-13 (AMSGGVDS) and Leu-32. The active-site Nucleophile is Cys-101. Cys-101 and Cys-193 form a disulfide bridge. An ATP-binding site is contributed by Gly-125. The interaction with tRNA stretch occupies residues 143 to 145 (KDQ). Cys-193 acts as the Cysteine persulfide intermediate in catalysis.

Belongs to the MnmA/TRMU family.

Its subcellular location is the cytoplasm. It catalyses the reaction S-sulfanyl-L-cysteinyl-[protein] + uridine(34) in tRNA + AH2 + ATP = 2-thiouridine(34) in tRNA + L-cysteinyl-[protein] + A + AMP + diphosphate + H(+). In terms of biological role, catalyzes the 2-thiolation of uridine at the wobble position (U34) of tRNA, leading to the formation of s(2)U34. This is tRNA-specific 2-thiouridylase MnmA from Mycobacterium marinum (strain ATCC BAA-535 / M).